Reading from the N-terminus, the 194-residue chain is Rho-related protein racC (194 aa).

GTP contacts are provided by alanine 17, glycine 19, lysine 20, threonine 21, cysteine 22, glutamate 34, tyrosine 36, threonine 39, glycine 64, lysine 120, aspartate 122, alanine 163, and lysine 164. Threonine 21 is a Mg(2+) binding site. Short sequence motifs (switch) lie at residues 30 to 41 (RKFPEDYIPTVF) and 61 to 79 (DTAGQEEYDQLRPLSYSSA). Position 39 (threonine 39) interacts with Mg(2+). Cysteine methyl ester is present on cysteine 191. The S-geranylgeranyl cysteine moiety is linked to residue cysteine 191. The propeptide at 192–194 (ALL) is removed in mature form.

Belongs to the small GTPase superfamily. Rho family. In terms of assembly, interacts (GTP-bound form) with PAK4 (via CRIB domain). Interacts (GTP-bound form) with PAK5 (via CRIB domain). Mg(2+) serves as cofactor.

It is found in the cell membrane. The protein localises to the cytoplasm. The protein resides in the cytoskeleton. The catalysed reaction is GTP + H2O = GDP + phosphate + H(+). Its activity is regulated as follows. Regulated by guanine nucleotide exchange factors (GEFs) which promote the exchange of bound GDP for free GTP, GTPase activating proteins (GAPs) which increase the GTP hydrolysis activity, and GDP dissociation inhibitors which inhibit the dissociation of the nucleotide from the GTPase. Functionally, small GTPase which cycles between active GTP-bound and inactive GDP-bound states. This Entamoeba histolytica (strain ATCC 30459 / HM-1:IMSS / ABRM) protein is Rho-related protein racC.